We begin with the raw amino-acid sequence, 354 residues long: uncharacterized protein (354 aa).

Disordered regions lie at residues 1–74 (MGTK…ENCR) and 87–115 (SESGVCTEPEERGQGGKKSQFLPINQRAS). An N6-acetyllysine modification is found at Lys-19. Residues 32–41 (EGPSSNSSFH) show a composition bias toward low complexity. Positions 45–54 (EEGTDLEGDM) are enriched in acidic residues. Ser-115 and Ser-174 each carry phosphoserine. Polar residues predominate over residues 182–199 (QGSSQDLPMQANLSQSNE). Disordered stretches follow at residues 182–208 (QGSSQDLPMQANLSQSNEGPLLAGRDR) and 235–298 (QVAD…DELS). The residue at position 291 (Tyr-291) is a Phosphotyrosine. Phosphoserine is present on Ser-292.

This is an uncharacterized protein from Mus musculus (Mouse).